Consider the following 508-residue polypeptide: Photosystem II CP47 reaction center protein (508 aa).

6 helical membrane passes run 21–36 (AVHI…WAGS), 101–115 (IVFS…IWHW), 140–156 (GIHL…FGAF), 203–218 (IAAG…FHLS), 237–252 (VLSS…AFVV), and 457–472 (TFAL…HGAR).

The protein belongs to the PsbB/PsbC family. PsbB subfamily. As to quaternary structure, PSII is composed of 1 copy each of membrane proteins PsbA, PsbB, PsbC, PsbD, PsbE, PsbF, PsbH, PsbI, PsbJ, PsbK, PsbL, PsbM, PsbT, PsbX, PsbY, PsbZ, Psb30/Ycf12, at least 3 peripheral proteins of the oxygen-evolving complex and a large number of cofactors. It forms dimeric complexes. Binds multiple chlorophylls. PSII binds additional chlorophylls, carotenoids and specific lipids. is required as a cofactor.

The protein localises to the plastid. It localises to the chloroplast thylakoid membrane. Functionally, one of the components of the core complex of photosystem II (PSII). It binds chlorophyll and helps catalyze the primary light-induced photochemical processes of PSII. PSII is a light-driven water:plastoquinone oxidoreductase, using light energy to abstract electrons from H(2)O, generating O(2) and a proton gradient subsequently used for ATP formation. The chain is Photosystem II CP47 reaction center protein from Hordeum vulgare (Barley).